The following is a 395-amino-acid chain: Protein hedgehog (395 aa).

Positions 1–26 (MDNHSSVPWASAASVTCLSLDAKCHS) are cleaved as a signal peptide. A compositionally biased stretch (low complexity) spans 26–43 (SSSSSCSSKSTASSISAS). Positions 26–46 (SSSSSCSSKSTASSISASPET) are disordered. The propeptide occupies 27 to 82 (SSSSCSSKSTASSISASPETQTMRHIAHTQRCLSRLTSLVALLLIVLPMMFSPAHS). Cys-83 carries the N-palmitoyl cysteine lipid modification. 7 residues coordinate Ca(2+): Glu-147, Glu-148, Asp-153, Thr-183, Glu-184, Asp-187, and Asp-189. A lipid anchor (Cholesterol glycine ester) is attached at Gly-255.

It belongs to the hedgehog family. Interacts with shf. The C-terminal part of the hedgehog protein precursor displays an autoproteolysis activity that results in the cleavage of the full-length protein into two parts (N-product and C-product). In addition, the C-terminal part displays a cholesterol transferase activity that results by the covalent attachment of a cholesterol moiety to the C-terminal of the newly generated N-product. The N-product is the active species in both local and long-range signaling, whereas the C-product has no signaling activity. In terms of processing, cholesterylation is required for N-product targeting to lipid rafts and multimerization. Post-translationally, N-palmitoylation by Rasp of the hedgehog N-product, within the secretory pathway, is required for the embryonic and larval patterning activities of the hedgehog signal.

The protein resides in the nucleus. It is found in the cytoplasm. The protein localises to the cell membrane. The catalysed reaction is glycyl-L-cysteinyl-[protein] + cholesterol + H(+) = [protein]-C-terminal glycyl cholesterol ester + N-terminal L-cysteinyl-[protein]. Its function is as follows. The C-terminal part of the hedgehog protein precursor displays an autoproteolysis activity that results in the cleavage of the full-length protein into two parts (N-product and C-product). In addition, the C-terminal part displays a cholesterol transferase activity that results by the covalent attachment of a cholesterol moiety to the C-terminal of the newly generated N-product. Once cleaved, the C-product has no signaling activity and diffuses from the cell. Functionally, the dually lipidated hedgehog protein N-product is a morphogen which is essential for a variety of patterning events during development. Establishes the anterior-posterior axis of the embryonic segments and patterns the larval imaginal disks. Binds to the patched (ptc) receptor, which functions in association with smoothened (smo), to activate the transcription of target genes wingless (wg), decapentaplegic (dpp) and ptc. In the absence of hh, ptc represses the constitutive signaling activity of smo through fused (fu). Essential component of a signaling pathway which regulates the Duox-dependent gut immune response to bacterial uracil; required to activate Cad99C-dependent endosome formation, norpA-dependent Ca2+ mobilization and p38 MAPK, which are essential steps in the Duox-dependent production of reactive oxygen species (ROS) in response to intestinal bacterial infection. During photoreceptor differentiation, it up-regulates transcription of Ubr3, which in turn promotes the hh-signaling pathway by mediating the ubiquitination and degradation of cos. In Drosophila simulans (Fruit fly), this protein is Protein hedgehog.